The primary structure comprises 474 residues: Shufflon protein A (474 aa).

Residues methionine 1 to glycine 361 form a constant region region. Positions threonine 362–threonine 474 are variable region.

The polypeptide is Shufflon protein A (Escherichia coli).